The primary structure comprises 141 residues: MAKKVVGEIKLQIPAGKANPSPPVGPALGQRGVNIMEFCKAFNERTKDMGSFNIPVIITVYQDKSFTFITKKPPVTDLIKKASGVEKGSDNPLKNKIAKLTHKQVEEIAQLKMEDLNTSTMEAAKKIVMGSARSMGVEVVD.

It belongs to the universal ribosomal protein uL11 family. In terms of assembly, part of the ribosomal stalk of the 50S ribosomal subunit. Interacts with L10 and the large rRNA to form the base of the stalk. L10 forms an elongated spine to which L12 dimers bind in a sequential fashion forming a multimeric L10(L12)X complex. One or more lysine residues are methylated.

In terms of biological role, forms part of the ribosomal stalk which helps the ribosome interact with GTP-bound translation factors. The sequence is that of Large ribosomal subunit protein uL11 from Helicobacter pylori (strain P12).